An 85-amino-acid chain; its full sequence is Large ribosomal subunit protein bL27 (85 aa).

The disordered stretch occupies residues 1–20 (MAHKKAGGSTRNGRDSEAKR).

This sequence belongs to the bacterial ribosomal protein bL27 family.

This chain is Large ribosomal subunit protein bL27, found in Salmonella agona (strain SL483).